The chain runs to 861 residues: 1,4-alpha-glucan-branching enzyme (861 aa).

(1,4-alpha-D-glucosyl)n contacts are provided by W173 and K208. D429 acts as the Nucleophile in catalysis. Residue E484 is the Proton donor of the active site.

The protein belongs to the glycosyl hydrolase 13 family. GlgB subfamily. In terms of assembly, monomer.

It is found in the plastid. It localises to the chloroplast. The protein resides in the amyloplast. It carries out the reaction Transfers a segment of a (1-&gt;4)-alpha-D-glucan chain to a primary hydroxy group in a similar glucan chain.. The protein operates within glycan biosynthesis; starch biosynthesis. Its function is as follows. Catalyzes the formation of the alpha-1,6-glucosidic linkages in starch by scission of a 1,4-alpha-linked oligosaccharide from growing alpha-1,4-glucan chains and the subsequent attachment of the oligosaccharide to the alpha-1,6 position. The protein is 1,4-alpha-glucan-branching enzyme (SBE1) of Solanum tuberosum (Potato).